A 166-amino-acid polypeptide reads, in one-letter code: 6,7-dimethyl-8-ribityllumazine synthase (166 aa).

Residues Phe-22, 56-58, and 80-82 contribute to the 5-amino-6-(D-ribitylamino)uracil site; these read SME and AVI. 85–86 lines the (2S)-2-hydroxy-3-oxobutyl phosphate pocket; that stretch reads ET. The active-site Proton donor is His-88. Phe-113 contributes to the 5-amino-6-(D-ribitylamino)uracil binding site. Position 127 (Arg-127) interacts with (2S)-2-hydroxy-3-oxobutyl phosphate.

Belongs to the DMRL synthase family.

The catalysed reaction is (2S)-2-hydroxy-3-oxobutyl phosphate + 5-amino-6-(D-ribitylamino)uracil = 6,7-dimethyl-8-(1-D-ribityl)lumazine + phosphate + 2 H2O + H(+). It functions in the pathway cofactor biosynthesis; riboflavin biosynthesis; riboflavin from 2-hydroxy-3-oxobutyl phosphate and 5-amino-6-(D-ribitylamino)uracil: step 1/2. Functionally, catalyzes the formation of 6,7-dimethyl-8-ribityllumazine by condensation of 5-amino-6-(D-ribitylamino)uracil with 3,4-dihydroxy-2-butanone 4-phosphate. This is the penultimate step in the biosynthesis of riboflavin. This chain is 6,7-dimethyl-8-ribityllumazine synthase, found in Thermotoga neapolitana (strain ATCC 49049 / DSM 4359 / NBRC 107923 / NS-E).